The following is a 493-amino-acid chain: 3-octaprenyl-4-hydroxybenzoate carboxy-lyase (493 aa).

Asn172 is a binding site for Mn(2+). Prenylated FMN contacts are provided by residues 175-177 (IYR), 189-191 (RWL), and 194-195 (RG). Glu238 lines the Mn(2+) pocket. Asp287 serves as the catalytic Proton donor.

This sequence belongs to the UbiD family. In terms of assembly, homohexamer. Prenylated FMN serves as cofactor. Requires Mn(2+) as cofactor.

The protein localises to the cell membrane. The enzyme catalyses a 4-hydroxy-3-(all-trans-polyprenyl)benzoate + H(+) = a 2-(all-trans-polyprenyl)phenol + CO2. Its pathway is cofactor biosynthesis; ubiquinone biosynthesis. Catalyzes the decarboxylation of 3-octaprenyl-4-hydroxy benzoate to 2-octaprenylphenol, an intermediate step in ubiquinone biosynthesis. This chain is 3-octaprenyl-4-hydroxybenzoate carboxy-lyase, found in Shewanella denitrificans (strain OS217 / ATCC BAA-1090 / DSM 15013).